Consider the following 47-residue polypeptide: MQVLSSLRSAKNRHPDCKIVRRRGRVYVICKSNPRFKAVQGGTHKKR.

The protein belongs to the bacterial ribosomal protein bL36 family.

The sequence is that of Large ribosomal subunit protein bL36A from Yersinia enterocolitica serotype O:8 / biotype 1B (strain NCTC 13174 / 8081).